Reading from the N-terminus, the 445-residue chain is Probable histidine--tRNA ligase, cytoplasmic (445 aa).

Belongs to the class-II aminoacyl-tRNA synthetase family.

The protein localises to the cytoplasm. It carries out the reaction tRNA(His) + L-histidine + ATP = L-histidyl-tRNA(His) + AMP + diphosphate + H(+). This chain is Probable histidine--tRNA ligase, cytoplasmic, found in Antonospora locustae (Microsporidian parasite).